The primary structure comprises 236 residues: Small ribosomal subunit protein uS2c (236 aa).

This sequence belongs to the universal ribosomal protein uS2 family.

It is found in the plastid. The protein localises to the chloroplast. In Populus alba (White poplar), this protein is Small ribosomal subunit protein uS2c (rps2).